The primary structure comprises 209 residues: Nascent polypeptide-associated complex subunit alpha-like protein 5 (209 aa).

The segment at 23–71 is disordered; that stretch reads EKEDDVVVEDVKDGEEEDDDEDDEDVEVEGEGGNENAKQSRSEKKSRKA. Residues 25–54 are compositionally biased toward acidic residues; sequence EDDVVVEDVKDGEEEDDDEDDEDVEVEGEG. In terms of domain architecture, NAC-A/B spans 62 to 127; it reads SRSEKKSRKA…AKVDDLSSQL (66 aa). One can recognise a UBA domain in the interval 170–207; the sequence is VEARDIDLVMTQAGVSKAKAVSALKANDGDIVSAIMEL.

It belongs to the NAC-alpha family.

In terms of biological role, may promote appropriate targeting of ribosome-nascent polypeptide complexes. This is Nascent polypeptide-associated complex subunit alpha-like protein 5 from Arabidopsis thaliana (Mouse-ear cress).